Here is a 180-residue protein sequence, read N- to C-terminus: NADH-quinone oxidoreductase subunit I (180 aa).

4Fe-4S ferredoxin-type domains follow at residues 48–80 and 90–119; these read IVLT…LQKA and EFFR…LTPD. Cys-60, Cys-63, Cys-66, Cys-70, Cys-99, Cys-102, Cys-105, and Cys-109 together coordinate [4Fe-4S] cluster.

The protein belongs to the complex I 23 kDa subunit family. As to quaternary structure, NDH-1 is composed of 13 different subunits. Subunits NuoA, H, J, K, L, M, N constitute the membrane sector of the complex. Requires [4Fe-4S] cluster as cofactor.

The protein localises to the cell inner membrane. It catalyses the reaction a quinone + NADH + 5 H(+)(in) = a quinol + NAD(+) + 4 H(+)(out). Functionally, NDH-1 shuttles electrons from NADH, via FMN and iron-sulfur (Fe-S) centers, to quinones in the respiratory chain. The immediate electron acceptor for the enzyme in this species is believed to be ubiquinone. Couples the redox reaction to proton translocation (for every two electrons transferred, four hydrogen ions are translocated across the cytoplasmic membrane), and thus conserves the redox energy in a proton gradient. In Edwardsiella ictaluri (strain 93-146), this protein is NADH-quinone oxidoreductase subunit I.